Here is a 265-residue protein sequence, read N- to C-terminus: Phosphatidylglycerol--prolipoprotein diacylglyceryl transferase (265 aa).

4 helical membrane-spanning segments follow: residues 17-37 (LSIR…WLLG), 56-76 (LVTY…MLFY), 92-112 (WQGG…VWFF), and 117-137 (GKGF…GLFA). An a 1,2-diacyl-sn-glycero-3-phospho-(1'-sn-glycerol)-binding site is contributed by Arg139. A run of 3 helical transmembrane segments spans residues 173–193 (PSQL…VWLY), 201–221 (GAVS…VELV), and 235–255 (WLTM…WLLA).

Belongs to the Lgt family.

It localises to the cell inner membrane. It carries out the reaction L-cysteinyl-[prolipoprotein] + a 1,2-diacyl-sn-glycero-3-phospho-(1'-sn-glycerol) = an S-1,2-diacyl-sn-glyceryl-L-cysteinyl-[prolipoprotein] + sn-glycerol 1-phosphate + H(+). Its pathway is protein modification; lipoprotein biosynthesis (diacylglyceryl transfer). Catalyzes the transfer of the diacylglyceryl group from phosphatidylglycerol to the sulfhydryl group of the N-terminal cysteine of a prolipoprotein, the first step in the formation of mature lipoproteins. The chain is Phosphatidylglycerol--prolipoprotein diacylglyceryl transferase from Solidesulfovibrio magneticus (strain ATCC 700980 / DSM 13731 / RS-1) (Desulfovibrio magneticus).